The chain runs to 166 residues: Large ribosomal subunit protein uL10 (166 aa).

The protein belongs to the universal ribosomal protein uL10 family. As to quaternary structure, part of the ribosomal stalk of the 50S ribosomal subunit. The N-terminus interacts with L11 and the large rRNA to form the base of the stalk. The C-terminus forms an elongated spine to which L12 dimers bind in a sequential fashion forming a multimeric L10(L12)X complex.

Forms part of the ribosomal stalk, playing a central role in the interaction of the ribosome with GTP-bound translation factors. This Neisseria meningitidis serogroup A / serotype 4A (strain DSM 15465 / Z2491) protein is Large ribosomal subunit protein uL10 (rplJ).